A 488-amino-acid chain; its full sequence is Cis-aconitate decarboxylase (488 aa).

Belongs to the PrpD family. As to quaternary structure, homodimer. Expressed in LPS-tolerized macrophages (at protein level). Expressed in the luminal epithelial cells of pregnant uterus. Expressed in microglia and macrophage cells.

Its subcellular location is the mitochondrion. The enzyme catalyses cis-aconitate + H(+) = itaconate + CO2. Its function is as follows. Cis-aconitate decarboxylase that catalyzes production of itaconate and is involved in the inhibition of the inflammatory response. Acts as a negative regulator of the Toll-like receptors (TLRs)-mediated inflammatory innate response by stimulating the tumor necrosis factor alpha-induced protein TNFAIP3 expression via reactive oxygen species (ROS) in LPS-tolerized macrophages. Involved in antimicrobial response of innate immune cells; ACOD1-mediated itaconic acid production contributes to the antimicrobial activity of macrophages by generating itaconate, leading to alkylation of proteins, such as TFEB. Involved in antiviral response following infection by flavivirus in neurons: ACOD1-mediated itaconate production inhibits the activity of succinate dehydrogenase, generating a metabolic state in neurons that suppresses replication of viral genomes. Plays a role in the embryo implantation. The sequence is that of Cis-aconitate decarboxylase from Mus musculus (Mouse).